The primary structure comprises 246 residues: Cell division protein ZapD (246 aa).

The protein belongs to the ZapD family. In terms of assembly, interacts with FtsZ.

It is found in the cytoplasm. Functionally, cell division factor that enhances FtsZ-ring assembly. Directly interacts with FtsZ and promotes bundling of FtsZ protofilaments, with a reduction in FtsZ GTPase activity. The polypeptide is Cell division protein ZapD (Vibrio atlanticus (strain LGP32) (Vibrio splendidus (strain Mel32))).